The sequence spans 361 residues: Phospho-N-acetylmuramoyl-pentapeptide-transferase (361 aa).

10 consecutive transmembrane segments (helical) span residues 28–48, 73–93, 98–118, 132–152, 168–188, 199–219, 235–255, 263–283, 288–308, and 338–358; these read LAIL…IRWL, TMGG…WGNL, MWIM…DDYL, YKLF…YFNP, WLID…VGSS, GLAA…LYIS, GTGE…GFLW, VFMG…LAVI, IVLA…ILQV, and KVIV…LLTL.

It belongs to the glycosyltransferase 4 family. MraY subfamily. It depends on Mg(2+) as a cofactor.

It is found in the cell inner membrane. The enzyme catalyses UDP-N-acetyl-alpha-D-muramoyl-L-alanyl-gamma-D-glutamyl-meso-2,6-diaminopimeloyl-D-alanyl-D-alanine + di-trans,octa-cis-undecaprenyl phosphate = di-trans,octa-cis-undecaprenyl diphospho-N-acetyl-alpha-D-muramoyl-L-alanyl-D-glutamyl-meso-2,6-diaminopimeloyl-D-alanyl-D-alanine + UMP. Its pathway is cell wall biogenesis; peptidoglycan biosynthesis. In terms of biological role, catalyzes the initial step of the lipid cycle reactions in the biosynthesis of the cell wall peptidoglycan: transfers peptidoglycan precursor phospho-MurNAc-pentapeptide from UDP-MurNAc-pentapeptide onto the lipid carrier undecaprenyl phosphate, yielding undecaprenyl-pyrophosphoryl-MurNAc-pentapeptide, known as lipid I. The chain is Phospho-N-acetylmuramoyl-pentapeptide-transferase from Thermodesulfovibrio yellowstonii (strain ATCC 51303 / DSM 11347 / YP87).